The sequence spans 425 residues: UPF0761 membrane protein xcc-b100_3490 (425 aa).

Helical transmembrane passes span 48 to 68 (VFAL…FPAF), 105 to 125 (FTVA…HSIE), 154 to 174 (GTML…LPLF), 182 to 202 (LAEF…IVLI), 216 to 236 (ALPG…GFGF), and 250 to 270 (ALSA…SVLL).

It belongs to the UPF0761 family.

It is found in the cell inner membrane. The protein is UPF0761 membrane protein xcc-b100_3490 of Xanthomonas campestris pv. campestris (strain B100).